Consider the following 67-residue polypeptide: Ferredoxin (67 aa).

4Fe-4S ferredoxin-type domains follow at residues 3 to 31 (WKVS…MNDE) and 36 to 67 (PKVE…IEEA). Residues cysteine 12, aspartate 15, and cysteine 18 each coordinate [4Fe-4S] cluster. Cysteine 22 and cysteine 49 are disulfide-bonded. Position 57 (cysteine 57) interacts with [4Fe-4S] cluster.

As to quaternary structure, homodimer. [4Fe-4S] cluster serves as cofactor. The cofactor is [3Fe-4S] cluster.

Its function is as follows. Ferredoxins are iron-sulfur proteins that transfer electrons in a wide variety of metabolic reactions. This is Ferredoxin (fdxA) from Pyrococcus furiosus (strain ATCC 43587 / DSM 3638 / JCM 8422 / Vc1).